A 134-amino-acid chain; its full sequence is D-ribose pyranase (134 aa).

Residue histidine 20 is the Proton donor of the active site. Substrate-binding positions include aspartate 28, histidine 99, and 123-125 (FSN).

This sequence belongs to the RbsD / FucU family. RbsD subfamily. As to quaternary structure, homodecamer.

The protein localises to the cytoplasm. It catalyses the reaction beta-D-ribopyranose = beta-D-ribofuranose. It functions in the pathway carbohydrate metabolism; D-ribose degradation; D-ribose 5-phosphate from beta-D-ribopyranose: step 1/2. Functionally, catalyzes the interconversion of beta-pyran and beta-furan forms of D-ribose. The polypeptide is D-ribose pyranase (Staphylococcus epidermidis (strain ATCC 12228 / FDA PCI 1200)).